Reading from the N-terminus, the 23-residue chain is NLLQFNKMIKVETGKNAIPFYAF.

The protein belongs to the phospholipase A2 family. Group II subfamily. It depends on Ca(2+) as a cofactor. In terms of processing, contains 7 disulfide bonds. As to expression, expressed by the venom gland.

The protein resides in the secreted. The catalysed reaction is a 1,2-diacyl-sn-glycero-3-phosphocholine + H2O = a 1-acyl-sn-glycero-3-phosphocholine + a fatty acid + H(+). Functionally, snake venom phospholipase A2 (PLA2) that shows presynaptic neurotoxicity and low myotoxicity. PLA2 catalyzes the calcium-dependent hydrolysis of the 2-acyl groups in 3-sn-phosphoglycerides. The protein is Basic phospholipase A2 intermexin of Gloydius intermedius (Central Asian pit viper).